The primary structure comprises 227 residues: Albumin-2 (227 aa).

4 Hemopexin repeats span residues 3–46 (PGYI…GPTP), 61–111 (SYGI…FPFF), 117–165 (ESGI…YPCF), and 171–221 (ESGA…WPSL). Residues Asn7 and Asp65 each coordinate Ca(2+). Ser118 is a spermine binding site. 2 residues coordinate Ca(2+): Asp121 and Asp175.

Monomer and homodimer. Dimers are prevalent in solution.

The protein localises to the cytoplasm. The protein resides in the cytosol. May play a role in response to oxidative stress and polyamine biosynthesis. The monomeric form binds one hemin per monomer. In the dimeric form, about half of the dimers bind one molecule of spermine each under physiological conditions. Ligand binding is mutually exclusive as binding of hemin leads to dissociation of the dimer. In Lathyrus sativus (White vetchling), this protein is Albumin-2.